A 1156-amino-acid polypeptide reads, in one-letter code: Nuclear pore complex protein Nup133 (1156 aa).

Residue M1 is modified to N-acetylmethionine. Residues M1–L39 are disordered. S7 and S15 each carry phosphoserine. Omega-N-methylarginine is present on R17. S27 carries the post-translational modification Phosphoserine. A Phosphothreonine modification is found at T28. Position 30 is an omega-N-methylarginine (R30). Phosphoserine occurs at positions 41, 45, 50, 72, 131, 480, 489, 493, 501, and 755. Residue K787 is modified to N6-acetyllysine. S1133 carries the phosphoserine modification.

The protein belongs to the nucleoporin Nup133 family. Forms part of the Nup160 subcomplex in the nuclear pore which is composed of NUP160, NUP133, NUP107 and Nup96. This complex plays a role in RNA export and in tethering Nup98 and NUP153 to the nucleus. In terms of tissue distribution, widely expressed in fetal and adult tissues. Expressed in the brain and kidney.

The protein resides in the nucleus. The protein localises to the nuclear pore complex. Its subcellular location is the chromosome. It is found in the centromere. It localises to the kinetochore. Functionally, involved in poly(A)+ RNA transport. Involved in nephrogenesis. This chain is Nuclear pore complex protein Nup133 (NUP133), found in Homo sapiens (Human).